The sequence spans 200 residues: Probable molybdenum cofactor guanylyltransferase (200 aa).

GTP-binding positions include leucine 9–glycine 11, lysine 21, aspartate 69, and aspartate 100. Aspartate 100 is a binding site for Mg(2+).

This sequence belongs to the MobA family. Mg(2+) serves as cofactor.

The protein resides in the cytoplasm. The enzyme catalyses Mo-molybdopterin + GTP + H(+) = Mo-molybdopterin guanine dinucleotide + diphosphate. Transfers a GMP moiety from GTP to Mo-molybdopterin (Mo-MPT) cofactor (Moco or molybdenum cofactor) to form Mo-molybdopterin guanine dinucleotide (Mo-MGD) cofactor. The protein is Probable molybdenum cofactor guanylyltransferase of Bacillus cereus (strain G9842).